The chain runs to 630 residues: Adenine DNA glycosylase (630 aa).

The segment covering 54 to 72 has biased composition (basic and acidic residues); it reads MRKCREKKEAEREAEREAE. The interval 54-123 is disordered; sequence MRKCREKKEA…ALGGDIEDLF (70 aa). Over residues 73-123 the composition is skewed to acidic residues; that stretch reads REAEEEEKAEEAEAEADKEEAEEESEEEEEEEEEEAEAEEEALGGDIEDLF. The active-site Proton donor/acceptor is the Glu-168. The [4Fe-4S] cluster site is built by Cys-341, Cys-348, Cys-351, and Cys-357. Residues 383-536 form the Nudix hydrolase domain; it reads PRHDFCCVCV…RKVPPFRLQH (154 aa). Positions 427 to 451 match the Nudix box motif; the sequence is VILNEEADSATRRNAINVYLKEAFR.

The protein belongs to the Nth/MutY family. It depends on [4Fe-4S] cluster as a cofactor.

The protein resides in the nucleus. The enzyme catalyses Hydrolyzes free adenine bases from 7,8-dihydro-8-oxoguanine:adenine mismatched double-stranded DNA, leaving an apurinic site.. Involved in oxidative DNA damage repair. Initiates repair of A*oxoG to C*G by removing the inappropriately paired adenine base from the DNA backbone. Possesses both adenine and 2-OH-A DNA glycosylase activities. In Arabidopsis thaliana (Mouse-ear cress), this protein is Adenine DNA glycosylase (MYH).